The following is a 190-amino-acid chain: Bifunctional protein PyrR (190 aa).

The PRPP-binding motif lies at 107 to 119 (IILVDDVLYSGRT).

It belongs to the purine/pyrimidine phosphoribosyltransferase family. PyrR subfamily.

The enzyme catalyses UMP + diphosphate = 5-phospho-alpha-D-ribose 1-diphosphate + uracil. Functionally, regulates the transcription of the pyrimidine nucleotide (pyr) operon in response to exogenous pyrimidines. Its function is as follows. Also displays a weak uracil phosphoribosyltransferase activity which is not physiologically significant. This is Bifunctional protein PyrR from Corynebacterium diphtheriae (strain ATCC 700971 / NCTC 13129 / Biotype gravis).